Reading from the N-terminus, the 79-residue chain is Exodeoxyribonuclease 7 small subunit (79 aa).

It belongs to the XseB family. Heterooligomer composed of large and small subunits.

Its subcellular location is the cytoplasm. The enzyme catalyses Exonucleolytic cleavage in either 5'- to 3'- or 3'- to 5'-direction to yield nucleoside 5'-phosphates.. In terms of biological role, bidirectionally degrades single-stranded DNA into large acid-insoluble oligonucleotides, which are then degraded further into small acid-soluble oligonucleotides. This is Exodeoxyribonuclease 7 small subunit from Geobacillus kaustophilus (strain HTA426).